The sequence spans 1561 residues: Adhesion G protein-coupled receptor B2 (1561 aa).

An N-terminal signal peptide occupies residues 1 to 20; it reads MTPACPLLLSVILSLRLATA. At 21–930 the chain is on the extracellular side; that stretch reads FDPAPSACSA…ELAGAPSVPL (910 aa). N-linked (GlcNAc...) asparagine glycans are attached at residues Asn-94, Asn-182, and Asn-183. Ser-257 carries an O-linked (Xyl...) (chondroitin sulfate) serine glycan. TSP type-1 domains are found at residues 300 to 353, 355 to 408, 410 to 463, and 466 to 519; these read DPAA…ATCP, HGVW…AACP, EGQW…LDCP, and DGKW…KRCP. 14 disulfide bridges follow: Cys-312–Cys-346, Cys-316–Cys-352, Cys-327–Cys-336, Cys-367–Cys-402, Cys-371–Cys-407, Cys-382–Cys-392, Cys-422–Cys-457, Cys-426–Cys-462, Cys-437–Cys-447, Cys-478–Cys-513, Cys-482–Cys-518, Cys-493–Cys-503, Cys-525–Cys-560, and Cys-548–Cys-578. Asn-347 carries N-linked (GlcNAc...) asparagine glycosylation. Asn-428 carries an N-linked (GlcNAc...) asparagine glycan. 2 N-linked (GlcNAc...) asparagine glycosylation sites follow: Asn-551 and Asn-636. The region spanning 748–918 is the GAIN-B domain; that stretch reads DRLFLPKEVL…AVLAQPPKDL (171 aa). Positions 757–797 are disordered; sequence LSLSSPGKPATPGAATAGSPGRGRGPGTVPPGPGHAHQRLL. Residues 760–775 show a composition bias toward low complexity; it reads SSPGKPATPGAATAGS. N-linked (GlcNAc...) asparagine glycosylation is present at Asn-861. Intrachain disulfides connect Cys-868–Cys-900 and Cys-888–Cys-902. The segment at 868 to 918 is GPS; the sequence is CASWDYSRADTNSGDWNTESCQTLETQAAHTRCQCQHLSTFAVLAQPPKDL. A helical membrane pass occupies residues 931 to 951; sequence VIGCAVSCMALLTLLAIYAAF. At 952 to 959 the chain is on the cytoplasmic side; the sequence is WRFIKSER. The helical transmembrane segment at 960-980 threads the bilayer; that stretch reads SIILLNFCLSILASNILILVG. Topologically, residues 981-988 are extracellular; that stretch reads QSRVLSKG. A helical transmembrane segment spans residues 989–1009; sequence VCTMTAAFLHFFFLSSFCWVL. The Cytoplasmic portion of the chain corresponds to 1010-1030; sequence TEAWQSYLAVIGRMRTRLVRK. The chain crosses the membrane as a helical span at residues 1031–1051; sequence RFLCLGWGLPALVVAVSVGFT. Residues 1052-1072 are Extracellular-facing; the sequence is RTKGYGTSSYCWLSLEGGLLY. A helical transmembrane segment spans residues 1073-1093; it reads AFVGPAAVIVLVNMLIGIIVF. The Cytoplasmic portion of the chain corresponds to 1094 to 1115; that stretch reads NKLMARDGVSDKSKKQRAGSER. Residues 1116 to 1136 traverse the membrane as a helical segment; the sequence is CPWASLLLPCSACGAVPSPLL. Over 1137-1147 the chain is Extracellular; the sequence is SSASARNAMAS. A helical membrane pass occupies residues 1148-1168; it reads LWSSCVVLPLLALTWMSAVLA. Residues 1169 to 1561 lie on the Cytoplasmic side of the membrane; the sequence is MTDRRSVLFQ…PPDGDFQTEV (393 aa). Tyr-1345 carries the phosphotyrosine modification. Disordered regions lie at residues 1355 to 1377, 1417 to 1447, and 1491 to 1561; these read LQPG…GTPR, FQPP…PGST, and RYRS…QTEV. Positions 1366–1376 are enriched in basic and acidic residues; sequence EAPRARPEGTP. Basic and acidic residues predominate over residues 1491-1502; sequence RYRSQSSAKEKP. Positions 1519-1528 are enriched in polar residues; that stretch reads SWSTFKSMTL. The span at 1551 to 1561 shows a compositional bias: acidic residues; sequence EPPDGDFQTEV.

Belongs to the G-protein coupled receptor 2 family. Adhesion G-protein coupled receptor (ADGR) subfamily. In terms of assembly, heterodimer of 2 chains generated by proteolytic processing; the large extracellular N-terminal fragment and the membrane-bound C-terminal fragment predominantly remain associated and non-covalently linked. Interacts with GABPB2. Interacts (via carboxy-terminus) with TAX1BP3. Interacts with GNAZ. Interacts with SH3GL2. Post-translationally, glycosylated. Autoproteolytically processed at the GPS region of the GAIN-B domain; this cleavage modulates receptor activity. Additionally, furin is involved in the cleavage at another site, in the middle of the extracellular domain, generating a soluble fragment. As to expression, specifically expressed in the brain. The peak level in the brain is observed 10 days after birth.

It is found in the cell membrane. The protein localises to the secreted. Receptor activity is regulated by proteolytic processing. The long N-terminal has a an inhibitory effect on the constitutive signaling activity. Removal of the N-terminal region induces an increase of the receptor activity. In terms of biological role, orphan G-protein coupled receptor involved in cell adhesion and probably in cell-cell interactions. Activates NFAT-signaling pathway, a transcription factor, via the G-protein GNAZ. Involved in angiogenesis inhibition. The sequence is that of Adhesion G protein-coupled receptor B2 (Adgrb2) from Mus musculus (Mouse).